Here is a 193-residue protein sequence, read N- to C-terminus: Xanthine phosphoribosyltransferase (193 aa).

Positions 20 and 27 each coordinate xanthine. Residue alanine 129–alanine 133 coordinates 5-phospho-alpha-D-ribose 1-diphosphate. Lysine 157 is a binding site for xanthine.

The protein belongs to the purine/pyrimidine phosphoribosyltransferase family. Xpt subfamily. In terms of assembly, homodimer.

Its subcellular location is the cytoplasm. It carries out the reaction XMP + diphosphate = xanthine + 5-phospho-alpha-D-ribose 1-diphosphate. Its pathway is purine metabolism; XMP biosynthesis via salvage pathway; XMP from xanthine: step 1/1. Its function is as follows. Converts the preformed base xanthine, a product of nucleic acid breakdown, to xanthosine 5'-monophosphate (XMP), so it can be reused for RNA or DNA synthesis. In Bifidobacterium animalis subsp. lactis (strain AD011), this protein is Xanthine phosphoribosyltransferase.